The chain runs to 1180 residues: DNA-directed RNA polymerase subunit beta (1180 aa).

The protein belongs to the RNA polymerase beta chain family. The RNAP catalytic core consists of 2 alpha, 1 beta, 1 beta' and 1 omega subunit. When a sigma factor is associated with the core the holoenzyme is formed, which can initiate transcription.

The catalysed reaction is RNA(n) + a ribonucleoside 5'-triphosphate = RNA(n+1) + diphosphate. Its function is as follows. DNA-dependent RNA polymerase catalyzes the transcription of DNA into RNA using the four ribonucleoside triphosphates as substrates. This is DNA-directed RNA polymerase subunit beta from Macrococcus caseolyticus (strain JCSC5402) (Macrococcoides caseolyticum).